Consider the following 333-residue polypeptide: Fe(3+)-citrate import system permease protein YfmD (333 aa).

9 helical membrane passes run 13-33 (LMMF…NLSV), 67-87 (TLIG…MQAM), 97-117 (IFGV…ILPA), 121-141 (SSVI…YMIA), 151-171 (LALS…AIII), 201-221 (FSVI…VLGL), 238-258 (ILIS…AGPI), 279-299 (YVLP…DVLA), and 302-322 (IAFP…TPFF).

Belongs to the binding-protein-dependent transport system permease family. FecCD subfamily. The complex is composed of one ATP-binding protein (YfmF), two transmembrane proteins (YfmD and YfmE) and a solute-binding protein (YfmC).

It is found in the cell membrane. Part of the ABC transporter complex YfmCDEF involved in citrate-dependent Fe(3+) import. Involved in the translocation of the substrate across the membrane. The polypeptide is Fe(3+)-citrate import system permease protein YfmD (yfmD) (Bacillus subtilis (strain 168)).